A 367-amino-acid chain; its full sequence is MVAKALAQLITCIILFCHVVASVEDLTIRQVTADNRRIRPNLLGTHTESKFRLFMSDYGKNYSTREEYIHRLGIFAKNVLKAAEHQMMDPSAVHGVTQFSDLTEEEFKRMYTGVADVGGSRGGTVGAEAPMVEVDGLPEDFDWREKGGVTEVKNQGACGSCWAFSTTGAAEGAHFVSTGKLLSLSEQQLVDCDQACDPKDKKACDNGCGGGLMTNAYEYLMEAGGLEEERSYPYTGKRGHCKFDPEKVAVRVLNFTTIPLDENQIAANLVRHGPLAVGLNAVFMQTYIGGVSCPLICSKRNVNHGVLLVGYGSKGFSILRLSNKPYWIIKNSWGKKWGENGYYKLCRGHDICGINSMVSAVATQVSS.

An N-terminal signal peptide occupies residues 1-22; that stretch reads MVAKALAQLITCIILFCHVVAS. The propeptide at 23–136 is activation peptide; sequence VEDLTIRQVT…AEAPMVEVDG (114 aa). N-linked (GlcNAc...) asparagine glycosylation occurs at Asn-61. Disulfide bonds link Cys-158–Cys-208 and Cys-192–Cys-241. Cys-161 is an active-site residue. Residue Asn-254 is glycosylated (N-linked (GlcNAc...) asparagine). Cys-297 and Cys-352 are disulfide-bonded. Residues His-304 and Asn-331 contribute to the active site.

It belongs to the peptidase C1 family.

Functionally, probable thiol protease. This Arabidopsis thaliana (Mouse-ear cress) protein is Probable cysteine protease RD19D.